Reading from the N-terminus, the 263-residue chain is Acyl-[acyl-carrier-protein]--UDP-N-acetylglucosamine O-acyltransferase (263 aa).

The protein belongs to the transferase hexapeptide repeat family. LpxA subfamily. Homotrimer.

The protein resides in the cytoplasm. It carries out the reaction a (3R)-hydroxyacyl-[ACP] + UDP-N-acetyl-alpha-D-glucosamine = a UDP-3-O-[(3R)-3-hydroxyacyl]-N-acetyl-alpha-D-glucosamine + holo-[ACP]. It functions in the pathway glycolipid biosynthesis; lipid IV(A) biosynthesis; lipid IV(A) from (3R)-3-hydroxytetradecanoyl-[acyl-carrier-protein] and UDP-N-acetyl-alpha-D-glucosamine: step 1/6. Its function is as follows. Involved in the biosynthesis of lipid A, a phosphorylated glycolipid that anchors the lipopolysaccharide to the outer membrane of the cell. This is Acyl-[acyl-carrier-protein]--UDP-N-acetylglucosamine O-acyltransferase from Campylobacter jejuni subsp. jejuni serotype O:6 (strain 81116 / NCTC 11828).